The sequence spans 656 residues: CXXC-type zinc finger protein 1 (656 aa).

Met1 is subject to N-acetylmethionine. Residues 1 to 14 (MEGDGSDPEPPDAG) are compositionally biased toward acidic residues. Residues 1–20 (MEGDGSDPEPPDAGEDSKSE) form a disordered region. Phosphoserine is present on residues Ser6 and Ser19. Residues 28-76 (YCICRKPDINCFMIGCDNCNEWFHGDCIRITEKMAKAIREWYCRECREK) form a PHD-type zinc finger. The interval 84-162 (YRHKKSRERD…QHHQQQQQQI (79 aa)) is disordered. Positions 90–120 (RERDGNERDSSEPRDEGGGRKRPVPDPDLQR) are enriched in basic and acidic residues. Ser124 carries the post-translational modification Phosphoserine. A CXXC-type zinc finger spans residues 160–209 (QQIKRSARMCGECEACRRTEDCGHCDFCRDMKKFGGPNKIRQKCRLRQCQ). 8 residues coordinate Zn(2+): Cys169, Cys172, Cys175, Cys181, Cys184, Cys187, Cys203, and Cys208. Disordered stretches follow at residues 219–287 (FPSS…LPLD) and 311–373 (EESP…ASLP). Ser224 carries the post-translational modification Phosphoserine. Thr227 bears the Phosphothreonine mark. Positions 239–249 (LPTQQQPQPSQ) are enriched in low complexity. Lys250 participates in a covalent cross-link: Glycyl lysine isopeptide (Lys-Gly) (interchain with G-Cter in SUMO2). A compositionally biased stretch (basic residues) spans 321–334 (RKRAVKVKHVKRRE). Residues 335–345 (KKSEKKKEERY) show a composition bias toward basic and acidic residues. Residues 346 to 358 (KRHRQKQKHKDKW) are compositionally biased toward basic residues. Basic and acidic residues predominate over residues 359-368 (KHPERADAKD). Residues 422–474 (AEEHGKKLLERIRREQQSARTRLQEMERRFHELEAIILRAKQQAVREDEESNE) adopt a coiled-coil conformation.

Component of the SET1 complex, at least composed of the catalytic subunit (SETD1A or SETD1B), WDR5, WDR82, RBBP5, ASH2L/ASH2, CXXC1/CFP1 HCFC1 and DPY30. Interacts with SETD1A. Interacts with ZNF335. Interacts with PRDM9; this interaction does not link PRDM9-activated recombination hotspot sites with DSB machinery and is not required for the hotspot recognition pathway. Interacts with histone H3K4me3. May be regulated by proteolysis. As to expression, ubiquitous.

It localises to the nucleus speckle. The protein resides in the nucleus. Functionally, transcriptional activator that exhibits a unique DNA binding specificity for CpG unmethylated motifs with a preference for CpGG. This chain is CXXC-type zinc finger protein 1 (CXXC1), found in Homo sapiens (Human).